The primary structure comprises 271 residues: MPELPEVEVTRRSFAGAIEGATVRGITVGKPLRWPLGTEPAVLVGRRVCGVRRRGKYLLLDLDEGLLLIHLGMSGSLRFARDLPARGAHDHFELITDHGTLRLHDPRRFGAVVWAAGESDPRARKLLDGWGLEPLGEDFAFEAFHAGLRAKRTPIKQLLLAGTVVVGVGNIYACEVLFLAGIRPTTRACAIGPQRARRLHGAIREVLARAVERGGSTLRDFSSADGSAGHFQLEANVYGRAGLQCRQCGTPVRLSRQGQRSTYFCPHCQRA.

The active-site Schiff-base intermediate with DNA is the proline 2. Glutamate 3 functions as the Proton donor in the catalytic mechanism. Catalysis depends on lysine 56, which acts as the Proton donor; for beta-elimination activity. 3 residues coordinate DNA: histidine 89, arginine 107, and lysine 151. Residues 236 to 270 form an FPG-type zinc finger; it reads NVYGRAGLQCRQCGTPVRLSRQGQRSTYFCPHCQR. The Proton donor; for delta-elimination activity role is filled by arginine 260.

The protein belongs to the FPG family. Monomer. Requires Zn(2+) as cofactor.

It catalyses the reaction Hydrolysis of DNA containing ring-opened 7-methylguanine residues, releasing 2,6-diamino-4-hydroxy-5-(N-methyl)formamidopyrimidine.. The enzyme catalyses 2'-deoxyribonucleotide-(2'-deoxyribose 5'-phosphate)-2'-deoxyribonucleotide-DNA = a 3'-end 2'-deoxyribonucleotide-(2,3-dehydro-2,3-deoxyribose 5'-phosphate)-DNA + a 5'-end 5'-phospho-2'-deoxyribonucleoside-DNA + H(+). Functionally, involved in base excision repair of DNA damaged by oxidation or by mutagenic agents. Acts as a DNA glycosylase that recognizes and removes damaged bases. Has a preference for oxidized purines, such as 7,8-dihydro-8-oxoguanine (8-oxoG). Has AP (apurinic/apyrimidinic) lyase activity and introduces nicks in the DNA strand. Cleaves the DNA backbone by beta-delta elimination to generate a single-strand break at the site of the removed base with both 3'- and 5'-phosphates. In Acidovorax ebreus (strain TPSY) (Diaphorobacter sp. (strain TPSY)), this protein is Formamidopyrimidine-DNA glycosylase.